The sequence spans 507 residues: ATP synthase subunit alpha, mitochondrial (507 aa).

Position 171–178 (171–178) interacts with ATP; that stretch reads GDRQTGKT.

Belongs to the ATPase alpha/beta chains family. F-type ATPases have 2 components, CF(1) - the catalytic core - and CF(0) - the membrane proton channel. CF(1) has five subunits: alpha(3), beta(3), gamma(1), delta(1), epsilon(1). CF(0) has three main subunits: a, b and c.

The protein resides in the mitochondrion. It is found in the mitochondrion inner membrane. Its function is as follows. Mitochondrial membrane ATP synthase (F(1)F(0) ATP synthase or Complex V) produces ATP from ADP in the presence of a proton gradient across the membrane which is generated by electron transport complexes of the respiratory chain. F-type ATPases consist of two structural domains, F(1) - containing the extramembraneous catalytic core, and F(0) - containing the membrane proton channel, linked together by a central stalk and a peripheral stalk. During catalysis, ATP synthesis in the catalytic domain of F(1) is coupled via a rotary mechanism of the central stalk subunits to proton translocation. Subunits alpha and beta form the catalytic core in F(1). Rotation of the central stalk against the surrounding alpha(3)beta(3) subunits leads to hydrolysis of ATP in three separate catalytic sites on the beta subunits. Subunit alpha does not bear the catalytic high-affinity ATP-binding sites. The chain is ATP synthase subunit alpha, mitochondrial (ATPA) from Pisum sativum (Garden pea).